Here is a 169-residue protein sequence, read N- to C-terminus: Succinate dehydrogenase cytochrome b560 subunit, mitochondrial (169 aa).

Residues 1–29 constitute a mitochondrion transit peptide; it reads MAALLLRHVGRHCLRAHLSPQLCIRNAVP. Topologically, residues 30–62 are mitochondrial matrix; that stretch reads LGTTAKEEMERFWNKNLGSNRPLSPHITIYRWS. Residues 63–92 traverse the membrane as a helical segment; it reads LPMAMSICHRGTGIALSAGVSLFGLSALLL. The Mitochondrial intermembrane segment spans residues 93 to 112; the sequence is PGNFESHLELVKSLCLGPTL. The helical transmembrane segment at 113-137 threads the bilayer; it reads IYTAKFGIVFPLMYHTWNGIRHLIW. A heme b-binding site is contributed by H127. Topologically, residues 138–144 are mitochondrial matrix; sequence DLGKGLT. The chain crosses the membrane as a helical span at residues 145-166; it reads IPQLTQSGVVVLILTVLSSVGL. The Mitochondrial intermembrane portion of the chain corresponds to 167–169; it reads AAM.

The protein belongs to the cytochrome b560 family. In terms of assembly, component of complex II composed of four subunits: the flavoprotein (FP) SDHA, iron-sulfur protein (IP) SDHB, and a cytochrome b560 composed of SDHC and SDHD. Requires heme b as cofactor. In terms of tissue distribution, detected in heart muscle (at protein level).

Its subcellular location is the mitochondrion inner membrane. It functions in the pathway carbohydrate metabolism; tricarboxylic acid cycle. Functionally, membrane-anchoring subunit of succinate dehydrogenase (SDH) that is involved in complex II of the mitochondrial electron transport chain and is responsible for transferring electrons from succinate to ubiquinone (coenzyme Q). SDH also oxidizes malate to the non-canonical enol form of oxaloacetate, enol-oxaloacetate. Enol-oxaloacetate, which is a potent inhibitor of the succinate dehydrogenase activity, is further isomerized into keto-oxaloacetate. The polypeptide is Succinate dehydrogenase cytochrome b560 subunit, mitochondrial (SDHC) (Sus scrofa (Pig)).